The chain runs to 246 residues: Pyridoxine 5'-phosphate synthase (246 aa).

Asparagine 12 lines the 3-amino-2-oxopropyl phosphate pocket. Residue 14 to 15 participates in 1-deoxy-D-xylulose 5-phosphate binding; the sequence is DH. Arginine 23 is a 3-amino-2-oxopropyl phosphate binding site. Histidine 48 (proton acceptor) is an active-site residue. The 1-deoxy-D-xylulose 5-phosphate site is built by arginine 50 and histidine 55. Catalysis depends on glutamate 75, which acts as the Proton acceptor. Threonine 105 serves as a coordination point for 1-deoxy-D-xylulose 5-phosphate. The active-site Proton donor is the histidine 196. 3-amino-2-oxopropyl phosphate contacts are provided by residues glycine 197 and 218-219; that span reads GH.

The protein belongs to the PNP synthase family. Homooctamer; tetramer of dimers.

The protein resides in the cytoplasm. The enzyme catalyses 3-amino-2-oxopropyl phosphate + 1-deoxy-D-xylulose 5-phosphate = pyridoxine 5'-phosphate + phosphate + 2 H2O + H(+). Its pathway is cofactor biosynthesis; pyridoxine 5'-phosphate biosynthesis; pyridoxine 5'-phosphate from D-erythrose 4-phosphate: step 5/5. Catalyzes the complicated ring closure reaction between the two acyclic compounds 1-deoxy-D-xylulose-5-phosphate (DXP) and 3-amino-2-oxopropyl phosphate (1-amino-acetone-3-phosphate or AAP) to form pyridoxine 5'-phosphate (PNP) and inorganic phosphate. The polypeptide is Pyridoxine 5'-phosphate synthase (Pseudomonas putida (strain GB-1)).